Consider the following 375-residue polypeptide: 23S rRNA (uracil(747)-C(5))-methyltransferase RlmC (375 aa).

Residues C3, C11, C14, and C87 each contribute to the [4Fe-4S] cluster site. Residues Q212, F241, E262, and N307 each coordinate S-adenosyl-L-methionine. C334 functions as the Nucleophile in the catalytic mechanism.

This sequence belongs to the class I-like SAM-binding methyltransferase superfamily. RNA M5U methyltransferase family. RlmC subfamily.

The catalysed reaction is uridine(747) in 23S rRNA + S-adenosyl-L-methionine = 5-methyluridine(747) in 23S rRNA + S-adenosyl-L-homocysteine + H(+). Catalyzes the formation of 5-methyl-uridine at position 747 (m5U747) in 23S rRNA. This chain is 23S rRNA (uracil(747)-C(5))-methyltransferase RlmC, found in Salmonella arizonae (strain ATCC BAA-731 / CDC346-86 / RSK2980).